The chain runs to 223 residues: Adenine phosphoribosyltransferase (223 aa).

This sequence belongs to the purine/pyrimidine phosphoribosyltransferase family. Homodimer.

The protein resides in the cytoplasm. The catalysed reaction is AMP + diphosphate = 5-phospho-alpha-D-ribose 1-diphosphate + adenine. Its pathway is purine metabolism; AMP biosynthesis via salvage pathway; AMP from adenine: step 1/1. Catalyzes a salvage reaction resulting in the formation of AMP, that is energically less costly than de novo synthesis. The chain is Adenine phosphoribosyltransferase from Mycobacterium bovis (strain ATCC BAA-935 / AF2122/97).